A 257-amino-acid polypeptide reads, in one-letter code: Acetylglutamate kinase (257 aa).

Substrate is bound by residues glycine 41 to glycine 42, arginine 63, and asparagine 158.

Belongs to the acetylglutamate kinase family. ArgB subfamily.

It is found in the cytoplasm. The enzyme catalyses N-acetyl-L-glutamate + ATP = N-acetyl-L-glutamyl 5-phosphate + ADP. It functions in the pathway amino-acid biosynthesis; L-arginine biosynthesis; N(2)-acetyl-L-ornithine from L-glutamate: step 2/4. In terms of biological role, catalyzes the ATP-dependent phosphorylation of N-acetyl-L-glutamate. In Phocaeicola vulgatus (strain ATCC 8482 / DSM 1447 / JCM 5826 / CCUG 4940 / NBRC 14291 / NCTC 11154) (Bacteroides vulgatus), this protein is Acetylglutamate kinase.